The primary structure comprises 485 residues: Palmitoyltransferase ZDHHC1 (485 aa).

Residues 1-41 are disordered; that stretch reads MYKMNICNKPSNKTAPEKSVWTAPAQPSGPSPELQGQRSRR. At 1–52 the chain is on the cytoplasmic side; the sequence is MYKMNICNKPSNKTAPEKSVWTAPAQPSGPSPELQGQRSRRNGWSWPPHPLQ. Positions 1–271 are mediates interaction with STING1; that stretch reads MYKMNICNKP…GHLLCFHIYL (271 aa). Residues 53–73 traverse the membrane as a helical segment; it reads IVAWLLYLFFAVIGFGILVPL. Residues 74–77 lie on the Lumenal side of the membrane; sequence LPHH. The helical transmembrane segment at 78–98 threads the bilayer; sequence WVPAGYACMGAIFAGHLVVHL. At 99–185 the chain is on the cytoplasmic side; that stretch reads TAVSIDPADA…YRLFLHSVAS (87 aa). The 51-residue stretch at 134-184 folds into the DHHC domain; sequence LHCNLCNVDVSARSKHCSACNKCVCGFDHHCKWLNNCVGERNYRLFLHSVA. Catalysis depends on Cys164, which acts as the S-palmitoyl cysteine intermediate. A helical membrane pass occupies residues 186-206; the sequence is ALLGVLLLVLVATYVFVEFFV. Over 207-241 the chain is Lumenal; sequence NPMRLRTNRHFEVLKNHTDVWFVFLPAAPVETQAP. A helical membrane pass occupies residues 242-262; that stretch reads AILALAALLILLGLLSTALLG. Residues 263–485 lie on the Cytoplasmic side of the membrane; the sequence is HLLCFHIYLM…RGRRVRPPFS (223 aa). 2 disordered regions span residues 324-358 and 462-485; these read EPPG…GPPV and LWPP…PPFS. The segment covering 475-485 has biased composition (basic residues); the sequence is WRGRRVRPPFS.

Belongs to the DHHC palmitoyltransferase family. In terms of assembly, interacts with STING1; ZDHHC1 constitutively interacts with STING1 and in presence of DNA viruses activates it by promoting its cGAMP-induced oligomerization and the recruitment of downstream signaling components. As to expression, widely expressed with significant expression in heart, brain, placenta, lung, liver, kidney, testis, thymus and small intestine. Expressed at lower levels in adult pancreas and lung.

Its subcellular location is the endosome membrane. It is found in the endoplasmic reticulum membrane. The protein localises to the golgi apparatus. It catalyses the reaction L-cysteinyl-[protein] + hexadecanoyl-CoA = S-hexadecanoyl-L-cysteinyl-[protein] + CoA. In terms of biological role, palmitoyltransferase that catalyzes the addition of palmitate onto various protein substrates, such as NCDN and NLRP3. Has a palmitoyltransferase activity toward NCDN and regulates NCDN association with endosome membranes through this palmitoylation. Acts as an activator of the NLRP3 inflammasome by mediating palmitoylation of 'Cys-130' and 'Cys-958' of NLRP3, thereby promoting NLRP3 phosphorylation and activation by NEK7. Also has a palmitoyltransferase activity-independent function in DNA virus-triggered and CGAS-mediated innate immune response. Functions as an activator of STING1 by promoting its cGAMP-induced oligomerization and the recruitment of downstream signaling components. In Homo sapiens (Human), this protein is Palmitoyltransferase ZDHHC1.